Reading from the N-terminus, the 154-residue chain is Bacterial ferritin (154 aa).

Residues 1 to 145 (MQGHPEVIDY…QQLGLIARMG (145 aa)) enclose the Ferritin-like diiron domain. Residues Glu-18, His-46, Glu-47, Glu-50, Glu-51, His-54, Glu-93, Asp-129, and His-130 each coordinate Fe(3+).

Belongs to the bacterioferritin family. In terms of assembly, the bacterioferritin (BFR) complex is formed of 24 subunits (FtnA and BfrB) arranged as 12 homodimers. The holocomplex contains about 8.7% Fe and 8.0% phosphate. In vivo purifies with BfrB in varying ratios, depending on the O(2) content; as O(2) decreases FtnA content rises. Pure FtnA BFR complexes are not isolated in situ, although in a bfrB deletion some iron will accumulate in FtnA ferritin complexes. Upon crystallization forms homooligomers of 24 subunits, the BFR complex, arranged as 12 dimers, that are packed together to form an approximately spherical molecule with a central cavity, in which large amounts of iron can be deposited. The BFR shell has three- and four-fold pores; Fe(2+) may move in and out of the shell via the four-fold pores. Does not interact with Bfd.

It is found in the cytoplasm. It catalyses the reaction 4 Fe(2+) + O2 + 4 H(+) = 4 Fe(3+) + 2 H2O. The catalysed reaction is Fe(2+)(in) = Fe(2+)(out). Its function is as follows. Plays a role in catalase A (katA) expression; activity is required for optimal KatA activity and resistance to H(2)O(2). Iron-storage protein that is part of the heterooligomeric bacterioferritin (BFR) complex. The ferroxidase center binds Fe(2+), oxidizes it using dioxygen to Fe(3+), and participates in subsequent Fe(3+) oxide mineral core formation within the central cavity of the BFR protein shell. Can store up to 520 iron atoms per ferritin protein molecule. Iron release requires only the input of electrons from ferredoxin NADP reductase (FPR), does not require Bfd. Does not bind heme. In Pseudomonas aeruginosa (strain ATCC 15692 / DSM 22644 / CIP 104116 / JCM 14847 / LMG 12228 / 1C / PRS 101 / PAO1), this protein is Bacterial ferritin.